A 151-amino-acid polypeptide reads, in one-letter code: uncharacterized protein (151 aa).

The signal sequence occupies residues 1-24; sequence MYYSIIIACLVLLLCLVIYVGHRA.

Belongs to the asfivirus EP152R family.

Its subcellular location is the virion. This is an uncharacterized protein from Ornithodoros (relapsing fever ticks).